We begin with the raw amino-acid sequence, 353 residues long: Serine/threonine-protein kinase SRK2G (353 aa).

Positions 4–260 (YDVVKDLGAG…LKEIKNHPWY (257 aa)) constitute a Protein kinase domain. ATP-binding positions include 10–18 (LGAGNFGVA) and K33. Residue D123 is the Proton acceptor of the active site. The segment at 299–353 (RNPAPSTSAVKSSGSGADEEEEEDVEAEVEEEEDDEDEYEKHVKEAQSCQESDKA) is disordered. Residues 302 to 313 (APSTSAVKSSGS) show a composition bias toward polar residues. Residues 315-336 (ADEEEEEDVEAEVEEEEDDEDE) are compositionally biased toward acidic residues. Residues 337-353 (YEKHVKEAQSCQESDKA) are compositionally biased toward basic and acidic residues.

Belongs to the protein kinase superfamily. Ser/Thr protein kinase family. As to expression, expressed in seedlings.

The protein localises to the nucleus. It catalyses the reaction L-seryl-[protein] + ATP = O-phospho-L-seryl-[protein] + ADP + H(+). It carries out the reaction L-threonyl-[protein] + ATP = O-phospho-L-threonyl-[protein] + ADP + H(+). The sequence is that of Serine/threonine-protein kinase SRK2G (SRK2G) from Arabidopsis thaliana (Mouse-ear cress).